The primary structure comprises 308 residues: Ribosomal RNA small subunit methyltransferase H (308 aa).

Residues 36–38, aspartate 55, phenylalanine 82, aspartate 103, and glutamine 110 each bind S-adenosyl-L-methionine; that span reads GGH.

It belongs to the methyltransferase superfamily. RsmH family.

The protein resides in the cytoplasm. It catalyses the reaction cytidine(1402) in 16S rRNA + S-adenosyl-L-methionine = N(4)-methylcytidine(1402) in 16S rRNA + S-adenosyl-L-homocysteine + H(+). Functionally, specifically methylates the N4 position of cytidine in position 1402 (C1402) of 16S rRNA. The chain is Ribosomal RNA small subunit methyltransferase H from Helicobacter pylori (strain J99 / ATCC 700824) (Campylobacter pylori J99).